The following is a 180-amino-acid chain: Large ribosomal subunit protein uL5 (180 aa).

This sequence belongs to the universal ribosomal protein uL5 family. In terms of assembly, part of the 50S ribosomal subunit; part of the 5S rRNA/L5/L18/L25 subcomplex. Contacts the 5S rRNA and the P site tRNA. Forms a bridge to the 30S subunit in the 70S ribosome.

Its function is as follows. This is one of the proteins that bind and probably mediate the attachment of the 5S RNA into the large ribosomal subunit, where it forms part of the central protuberance. In the 70S ribosome it contacts protein S13 of the 30S subunit (bridge B1b), connecting the 2 subunits; this bridge is implicated in subunit movement. Contacts the P site tRNA; the 5S rRNA and some of its associated proteins might help stabilize positioning of ribosome-bound tRNAs. The sequence is that of Large ribosomal subunit protein uL5 from Chlamydia abortus (strain DSM 27085 / S26/3) (Chlamydophila abortus).